A 203-amino-acid chain; its full sequence is ATP-dependent Clp protease proteolytic subunit (203 aa).

The active-site Nucleophile is the Ser-107. The active site involves His-132.

It belongs to the peptidase S14 family. As to quaternary structure, fourteen ClpP subunits assemble into 2 heptameric rings which stack back to back to give a disk-like structure with a central cavity, resembling the structure of eukaryotic proteasomes.

It is found in the cytoplasm. The catalysed reaction is Hydrolysis of proteins to small peptides in the presence of ATP and magnesium. alpha-casein is the usual test substrate. In the absence of ATP, only oligopeptides shorter than five residues are hydrolyzed (such as succinyl-Leu-Tyr-|-NHMec, and Leu-Tyr-Leu-|-Tyr-Trp, in which cleavage of the -Tyr-|-Leu- and -Tyr-|-Trp bonds also occurs).. In terms of biological role, cleaves peptides in various proteins in a process that requires ATP hydrolysis. Has a chymotrypsin-like activity. Plays a major role in the degradation of misfolded proteins. The chain is ATP-dependent Clp protease proteolytic subunit from Shewanella loihica (strain ATCC BAA-1088 / PV-4).